Here is a 103-residue protein sequence, read N- to C-terminus: Large ribosomal subunit protein bL21 (103 aa).

It belongs to the bacterial ribosomal protein bL21 family. Part of the 50S ribosomal subunit. Contacts protein L20.

This protein binds to 23S rRNA in the presence of protein L20. This Ectopseudomonas mendocina (strain ymp) (Pseudomonas mendocina) protein is Large ribosomal subunit protein bL21.